The sequence spans 244 residues: High frequency lysogenization protein HflD homolog (244 aa).

Belongs to the HflD family.

The protein localises to the cytoplasm. Its subcellular location is the cell inner membrane. The polypeptide is High frequency lysogenization protein HflD homolog (Acinetobacter baumannii (strain SDF)).